The chain runs to 444 residues: MEQDSDLESGRATNQRPPRVRVRGAGVRGRGRVRRRALSEGQRRSPFRLDDLQLPDSLYVTRALQRDHALEMPRGQVDFSLIEAEERRAGPTDEWYFESVKTYRAKPGDDLQTLIKNYAKISLECGAVYEINSKIVVTGACYIIGNCAVLRANLPVGTAMFEVLNVDVIPSIGFMERIVFSNILFDCRSTTAVVCCISERNTLFHNCVFSGPHMLCLDIRAGAEVRGCHFVGAVCALRSKGLYSVRVRNSIFEKCAFGVVSGSKASISHSMFKDCACCIMFGGQGTIAHSHFMATTCTDTPMNLQLCTCEGNGSHVVPLGNIHFASNREAPWPTFNANVLVRVRLYMGRRRGVFHPKQSTFSMCVIAAPRGVVQRIYLFSVYDATCAILQLGEAGDAATERLCTRGMRHNTPSLRAAYVTDTRIDREINSQDTAEFFSSDEDNL.

The tract at residues 1-42 (MEQDSDLESGRATNQRPPRVRVRGAGVRGRGRVRRRALSEGQ) is disordered. Phosphoserine is present on residues serine 438 and serine 439.

It belongs to the adenoviridae E1B 55 kDa protein family. Interacts with host PML-4 and PML-5; this interaction promotes efficient subnuclear targeting of E1B-55K to PML nuclear bodies. Interacts with E4-ORF3 protein. Interacts with E4-ORF6 protein.

Its subcellular location is the host nucleus. The protein resides in the host cytoplasm. Its function is as follows. Plays a major role to prevent cellular inhibition of viral genome replication. Assembles an SCF-like E3 ubiquitin ligase complex based on the cellular proteins ELOB, ELOC, CUL5 and RBX1, in cooperation with viral E4orf6. This viral RING-type ligase ubiquitinates cellular substrates and targets them to proteasomal degradation: TP53/p53, LIG4, MRE11-RAD50-NBS1 (MRN) complex, ITGA3, DAXX and BLM. E1B-55K probably acts as the substrate-specific adapter of the SCF-like E3 ubiquitin ligase complex. Degradation of host TP53/p53 activity is essential for preventing E1A-induced TP53 accumulation that would otherwise lead to cell apoptosis and growth arrest. E1B-55K also inactivates TP53 transcription-factor activity by binding its transactivation domain. E1B-55K also functions as a SUMO1 E3 ligase for TP53 which causes the latter to be sequestered in promyelocytic leukemia (PML) nuclear bodies thereby contributing to maximal inhibition of TP53 function. The chain is E1B 55 kDa protein from Canis lupus familiaris (Dog).